The chain runs to 226 residues: Large ribosomal subunit protein mL67 (226 aa).

This sequence belongs to the mitochondrion-specific ribosomal protein mL67 family. In terms of assembly, component of the mitochondrial large ribosomal subunit (mt-LSU). Mature yeast 74S mitochondrial ribosomes consist of a small (37S) and a large (54S) subunit. The 37S small subunit contains a 15S ribosomal RNA (15S mt-rRNA) and 34 different proteins. The 54S large subunit contains a 21S rRNA (21S mt-rRNA) and 46 different proteins.

It is found in the nucleus. It localises to the mitochondrion. Functionally, component of the mitochondrial ribosome (mitoribosome), a dedicated translation machinery responsible for the synthesis of mitochondrial genome-encoded proteins, including at least some of the essential transmembrane subunits of the mitochondrial respiratory chain. The mitoribosomes are attached to the mitochondrial inner membrane and translation products are cotranslationally integrated into the membrane. mL67/MHR1 also has extraribosomal functions, being involved in regulation of mitochondrial DNA recombination, maintenance and repair, and generation of homoplasmic cells. mL67/MHR1 also acts as transcription factor involved in regulation of RNA polymerase II-dependent transcription. In Saccharomyces cerevisiae (strain ATCC 204508 / S288c) (Baker's yeast), this protein is Large ribosomal subunit protein mL67 (MHR1).